A 331-amino-acid chain; its full sequence is MNNDNKRSAGGLGLVGDIGGTNARFALWRGQRLESIEVLACADYPRPELAVRDYLARIGESVANIDSVCLACAGPVGAADFRFTNNHWVINRAAFREELGLDHLLLVNDFSTMAWAASRLGADELVQVRAGSAQADRARLIIGPGTGLGVGSLLPLGGGRWEVLPCEGGHVDLPVTSPRDFALWQGLQARYGHVSAERALSGNGLLALYEISCALDGVAVRASSAAEVGALAMAGDAQADAVLEHFFLWLARVAGNAVLTVGALGGVYITGGIVPRFLERFIASGFAEAFARRGKTSGAYLQDVPVWVMTAEHPGLLGAGVALQQALDAEG.

An ATP-binding site is contributed by 16 to 21; the sequence is GDIGGT.

Belongs to the bacterial glucokinase family.

It is found in the cytoplasm. It catalyses the reaction D-glucose + ATP = D-glucose 6-phosphate + ADP + H(+). In Pseudomonas aeruginosa (strain UCBPP-PA14), this protein is Glucokinase.